The primary structure comprises 448 residues: Dual specificity mitogen-activated protein kinase kinase 5 (448 aa).

The tract at residues 18–25 (VIRIKIPN) is interaction with MAPK7. The PB1 domain maps to 18 to 109 (VIRIKIPNSG…EPLQIFPRAC (92 aa)). The interval 64 to 68 (DEDGD) is interaction with MAP3K2/MAP3K3. The disordered stretch occupies residues 116–144 (NIHGLKVNTRAGPSQHTSPVVSDSLPSNS). The tract at residues 117–131 (IHGLKVNTRAGPSQH) is interaction with MAPK7. Polar residues predominate over residues 126 to 144 (AGPSQHTSPVVSDSLPSNS). Residues 166–419 (IRYRDTLGHG…PEELMGHPFI (254 aa)) enclose the Protein kinase domain. Residues 172 to 180 (LGHGNGGTV) and Lys195 each bind ATP. Asp283 (proton acceptor) is an active-site residue. Ser311 carries the phosphoserine modification. Residue Thr315 is modified to Phosphothreonine.

It belongs to the protein kinase superfamily. STE Ser/Thr protein kinase family. MAP kinase kinase subfamily. As to quaternary structure, interacts with PARD6A, MAP3K3 and MAPK7. Forms a complex with SQSTM1 and PRKCZ or PRKCI. The cofactor is Mg(2+). Post-translationally, activated by phosphorylation on Ser/Thr by MAP kinase kinase kinases.

It is found in the cytoplasm. It catalyses the reaction L-seryl-[protein] + ATP = O-phospho-L-seryl-[protein] + ADP + H(+). It carries out the reaction L-threonyl-[protein] + ATP = O-phospho-L-threonyl-[protein] + ADP + H(+). The enzyme catalyses L-tyrosyl-[protein] + ATP = O-phospho-L-tyrosyl-[protein] + ADP + H(+). Functionally, acts as a scaffold for the formation of a ternary MAP3K2/MAP3K3-MAP3K5-MAPK7 signaling complex. Activation of this pathway appears to play a critical role in protecting cells from stress-induced apoptosis, neuronal survival and cardiac development and angiogenesis. As part of the MAPK/ERK signaling pathway, acts as a negative regulator of apoptosis in cardiomyocytes via promotion of STUB1/CHIP-mediated ubiquitination and degradation of ICER-type isoforms of CREM. The polypeptide is Dual specificity mitogen-activated protein kinase kinase 5 (Map2k5) (Mus musculus (Mouse)).